Reading from the N-terminus, the 134-residue chain is MADKIKLEVVTPERVVANEHVDFVVAPGVEGEIGILPFHAPLITSLDIGILRYTVEGKTEKIALSGGFLEVKGNKVVVLANAAERGEEIDVERAQRALERARERLARRTPDIDVLRAELAMRRALNRLKAAGKM.

Belongs to the ATPase epsilon chain family. As to quaternary structure, F-type ATPases have 2 components, CF(1) - the catalytic core - and CF(0) - the membrane proton channel. CF(1) has five subunits: alpha(3), beta(3), gamma(1), delta(1), epsilon(1). CF(0) has three main subunits: a, b and c.

The protein localises to the cell membrane. Produces ATP from ADP in the presence of a proton gradient across the membrane. The protein is ATP synthase epsilon chain of Carboxydothermus hydrogenoformans (strain ATCC BAA-161 / DSM 6008 / Z-2901).